The sequence spans 505 residues: Maturase K (505 aa).

Belongs to the intron maturase 2 family. MatK subfamily.

Its subcellular location is the plastid. It localises to the chloroplast. Functionally, usually encoded in the trnK tRNA gene intron. Probably assists in splicing its own and other chloroplast group II introns. In Nuphar variegata (Yellow pond lily), this protein is Maturase K.